Consider the following 134-residue polypeptide: Small ribosomal subunit protein uS8 (134 aa).

Belongs to the universal ribosomal protein uS8 family. Part of the 30S ribosomal subunit. Contacts proteins S5 and S12.

One of the primary rRNA binding proteins, it binds directly to 16S rRNA central domain where it helps coordinate assembly of the platform of the 30S subunit. In Petrotoga mobilis (strain DSM 10674 / SJ95), this protein is Small ribosomal subunit protein uS8.